Consider the following 328-residue polypeptide: tRNA uridine(34) hydroxylase (328 aa).

A Rhodanese domain is found at 130-224 (LDEDTVVLDT…YGKDPEVQGE (95 aa)). The active-site Cysteine persulfide intermediate is the Cys-184.

This sequence belongs to the TrhO family.

The enzyme catalyses uridine(34) in tRNA + AH2 + O2 = 5-hydroxyuridine(34) in tRNA + A + H2O. In terms of biological role, catalyzes oxygen-dependent 5-hydroxyuridine (ho5U) modification at position 34 in tRNAs. The polypeptide is tRNA uridine(34) hydroxylase (Streptococcus pyogenes serotype M28 (strain MGAS6180)).